Here is a 118-residue protein sequence, read N- to C-terminus: DNA-binding protein Msm_0708 (118 aa).

The interval 16–39 (EARQAAAQGQMQQQAQQQMQQQEA) is disordered. Over residues 18–39 (RQAAAQGQMQQQAQQQMQQQEA) the composition is skewed to low complexity.

The protein belongs to the PDCD5 family.

The polypeptide is DNA-binding protein Msm_0708 (Methanobrevibacter smithii (strain ATCC 35061 / DSM 861 / OCM 144 / PS)).